Reading from the N-terminus, the 1231-residue chain is S-layer protein A (1231 aa).

The signal sequence occupies residues 1–35 (MNKTLGLILTSVFLLSTLGIITGFVIPTQAANSND).

Belongs to the Sulfolobales SlaA family. In terms of assembly, the mushroom-shaped unit cells of the Sulfolobales' S-layers may consist of three SlaB subunits and six SlaA subunits.

It localises to the secreted. The protein localises to the cell wall. Its subcellular location is the S-layer. Its function is as follows. S-layer large protein. May form the highly ordered outer sheath. The chain is S-layer protein A from Saccharolobus solfataricus (strain ATCC 35092 / DSM 1617 / JCM 11322 / P2) (Sulfolobus solfataricus).